Here is a 172-residue protein sequence, read N- to C-terminus: uncharacterized protein (172 aa).

A disordered region spans residues 130–154 (EQEKGAAPQEGKDWQVISEEDKKNQ).

This is an uncharacterized protein from Bacillus subtilis (strain 168).